Reading from the N-terminus, the 92-residue chain is Small archaeal modifier protein 3 (92 aa).

Glycyl lysine isopeptide (Lys-Gly) (interchain with G-Cter in SAMP3) cross-links involve residues Lys18, Lys55, and Lys62. The residue at position 92 (Gly92) is a Glycyl adenylate; alternate. Gly92 is covalently cross-linked (Glycyl lysine isopeptide (Gly-Lys) (interchain with K-? in acceptor proteins); alternate).

As to quaternary structure, monomer. The C-terminal glycine is likely acyl-adenylated (-COAMP) by UbaA.

Its function is as follows. Functions as a protein modifier covalently attached to lysine residues of substrate proteins. The protein modification process is termed sampylation and involves the formation of an isopeptide bond between the SAMP3 C-terminal glycine carboxylate and the epsilon-amino group of lysine residues on target proteins. Seems to be able to form polymeric chains with itself at Lys-18, Lys-55 and Lys-62, similar to ubiquitin and other ubiquitin-like proteins. SAMP3 appears not to serve as a proteolytic signal in the cell to target proteins for degradation by proteasomes. May regulate molybdenum cofactor (MoCo) biosynthesis by inhibiting the activity of MPT synthase MoaE under aerobic conditions, providing a hierarchy of oxygen use prior to that of alternative electron acceptors such as DMSO. The protein is Small archaeal modifier protein 3 (samp3) of Haloferax volcanii (strain ATCC 29605 / DSM 3757 / JCM 8879 / NBRC 14742 / NCIMB 2012 / VKM B-1768 / DS2) (Halobacterium volcanii).